The primary structure comprises 52 residues: Conotoxin-like peptide 2 (52 aa).

The first 18 residues, 1-18 (MKFSTILLLVCPTVALSA), serve as a signal peptide directing secretion. Disulfide bonds link Cys24–Cys38, Cys31–Cys42, and Cys37–Cys49.

The protein resides in the secreted. The polypeptide is Conotoxin-like peptide 2 (CTL-2) (Orgyia pseudotsugata (Douglas-fir tussock moth)).